The primary structure comprises 470 residues: BTB/POZ domain-containing protein 17 (470 aa).

The first 18 residues, 1 to 18, serve as a signal peptide directing secretion; the sequence is MRMKGLYVVPLLLALVES. Residues 53 to 122 form the BTB domain; sequence SDTTLRIRTA…FYCGEISVNL (70 aa). One can recognise a BACK domain in the interval 161-261; it reads VVSWYHYALR…ITPSQLFQIQ (101 aa).

Its subcellular location is the secreted. This is BTB/POZ domain-containing protein 17 (btbd17) from Xenopus laevis (African clawed frog).